We begin with the raw amino-acid sequence, 1235 residues long: ATP-dependent helicase/nuclease subunit A (1235 aa).

In terms of domain architecture, UvrD-like helicase ATP-binding spans 4–470 (REYTLSQKQA…IILAENFRSM (467 aa)). 25 to 32 (ASAGSGKT) is a binding site for ATP. Residues 501-795 (QFGAKYYPDE…KLMTIHGSKG (295 aa)) form the UvrD-like helicase C-terminal domain.

The protein belongs to the helicase family. AddA subfamily. Heterodimer of AddA and AddB/RexB. It depends on Mg(2+) as a cofactor.

It carries out the reaction Couples ATP hydrolysis with the unwinding of duplex DNA by translocating in the 3'-5' direction.. The enzyme catalyses ATP + H2O = ADP + phosphate + H(+). Functionally, the heterodimer acts as both an ATP-dependent DNA helicase and an ATP-dependent, dual-direction single-stranded exonuclease. Recognizes the chi site generating a DNA molecule suitable for the initiation of homologous recombination. The AddA nuclease domain is required for chi fragment generation; this subunit has the helicase and 3' -&gt; 5' nuclease activities. The chain is ATP-dependent helicase/nuclease subunit A from Pediococcus pentosaceus (strain ATCC 25745 / CCUG 21536 / LMG 10740 / 183-1w).